Here is a 368-residue protein sequence, read N- to C-terminus: ASTRA-associated protein 1 (368 aa).

WD repeat units follow at residues 12–50, 53–91, 246–283, 294–333, and 336–368; these read GHSSSVTSVLFDANEYLYSGDEAGFVICWCLTSMRPKCA, AHTKTILGMQIVKGGALCTHGRDCRLVTWKIDFNCMTDN, SHSQPVLSVEYAGSKLFSTGADDCICLHPTPSSIADDL, TKHCGQQNIRIRSDNKILATAGWDGRGRVYSCQTLAPLAV, and YHSDGINSLAFHPGSNVIALASKDTRISLWKLY.

Belongs to the WD repeat ASA1 family. Component of the ASTRA chromatin-remodeling machinery complex.

It is found in the cytoplasm. The protein resides in the nucleus. Component of the ASTRA complex probably involved in chromatin remodeling. In Schizosaccharomyces pombe (strain 972 / ATCC 24843) (Fission yeast), this protein is ASTRA-associated protein 1 (asa1).